Consider the following 398-residue polypeptide: Phosphoglycerate kinase (398 aa).

Substrate-binding positions include D23–N25, R38, H61–R64, R120, and R153. Residues K203, E325, and G355–T358 each bind ATP.

Belongs to the phosphoglycerate kinase family. Monomer.

The protein resides in the cytoplasm. The catalysed reaction is (2R)-3-phosphoglycerate + ATP = (2R)-3-phospho-glyceroyl phosphate + ADP. It functions in the pathway carbohydrate degradation; glycolysis; pyruvate from D-glyceraldehyde 3-phosphate: step 2/5. The polypeptide is Phosphoglycerate kinase (Chelativorans sp. (strain BNC1)).